Reading from the N-terminus, the 314-residue chain is FHA domain-containing protein DDL (314 aa).

The span at 1–10 shows a compositional bias: low complexity; sequence MAPSSRSPSP. The tract at residues 1-146 is disordered; it reads MAPSSRSPSP…NVEEDSVARM (146 aa). A compositionally biased stretch (basic and acidic residues) spans 18 to 127; sequence ARGEKEIGRS…AIASRHDEGS (110 aa). The residue at position 133 (serine 133) is a Phosphoserine. The 64-residue stretch at 219–282 folds into the FHA domain; sequence YLFGRERRIA…NKTYINESPI (64 aa).

Interacts with DCL1 (via N-terminus). Expressed in roots, lateral roots, vascular strands of roots and leaves, vegetative meristems, pollen and developing seeds.

It is found in the nucleus. In terms of biological role, involved in the microRNA (miRNA) and short interfering RNA (siRNA) biogenesis. May facilitate DCL1 to access or recognize primary miRNAs. Binds RNA non-specifically. The polypeptide is FHA domain-containing protein DDL (DDL) (Arabidopsis thaliana (Mouse-ear cress)).